Consider the following 473-residue polypeptide: Dol-P-Glc:Glc(2)Man(9)GlcNAc(2)-PP-Dol alpha-1,2-glucosyltransferase (473 aa).

Residues 1–6 are Cytoplasmic-facing; that stretch reads MAQLEG. A helical transmembrane segment spans residues 7-27; it reads YCFSAALSCTFLVSCLLFSAF. Topologically, residues 28 to 64 are extracellular; that stretch reads SRALREPYMDEIFHLPQAQRYCEGHFSLSQWDPMITT. The chain crosses the membrane as a helical span at residues 65–85; it reads LPGLYLVSVGVVKPAIWIFAW. The Cytoplasmic portion of the chain corresponds to 86–97; it reads SEHVVCSIGMLR. The chain crosses the membrane as a helical span at residues 98–118; sequence FVNLLFSVGNFYLLYLLFHKV. Topologically, residues 119–126 are extracellular; the sequence is QPRNKAAS. Residues 127–147 traverse the membrane as a helical segment; sequence SIQRVLSTLTLAVFPTLYFFN. Topologically, residues 148-150 are cytoplasmic; sequence FLY. A helical membrane pass occupies residues 151–171; the sequence is YTEAGSMFFTLFAYLMCLYGN. At 172–175 the chain is on the extracellular side; sequence HKTS. A helical transmembrane segment spans residues 176 to 196; sequence AFLGFCGFMFRQTNIIWAVFC. Residues 197 to 256 lie on the Cytoplasmic side of the membrane; it reads AGNVIAQKLTEAWKTELQKKEDRLPPIKGPFAEFRKILQFLLAYSMSFKNLSMLFCLTWP. Residues 257–277 traverse the membrane as a helical segment; the sequence is YILLGFLFCAFVVVNGGIVIG. Topologically, residues 278-283 are extracellular; sequence DRSSHE. The helical transmembrane segment at 284–304 threads the bilayer; the sequence is ACLHFPQLFYFFSFTLFFSFP. Residues 305–317 lie on the Cytoplasmic side of the membrane; that stretch reads HLLSPSKIKTFLS. A helical membrane pass occupies residues 318–338; that stretch reads LVWKHGILFLVVTLVSVFLVW. Topologically, residues 339-365 are extracellular; sequence KFTYAHKYLLADNRHYTFYVWKRVFQR. The chain crosses the membrane as a helical span at residues 366–386; sequence YAILKYLLVPAYIFAGWSIAD. The Cytoplasmic segment spans residues 387–392; sequence SLKSKP. The chain crosses the membrane as a helical span at residues 393-413; the sequence is IFWNLMFFICLFIVIVPQKLL. Topologically, residues 414 to 436 are extracellular; sequence EFRYFILPYVIYRLNITLPPTSR. A helical transmembrane segment spans residues 437-457; sequence LVCELSCYAIVNFITFYIFLN. Residues 458–473 lie on the Cytoplasmic side of the membrane; that stretch reads KTFQWPNSQDIQRFMW.

The protein belongs to the ALG10 glucosyltransferase family. Interacts with KCNH1; may regulate KCNH1, possibly by regulating its N-glycosylation. Interacts with KCNH2; may reduce KCNH2 sensitivity to classic proarrhythmic drug blockade, possibly by regulating its N-glycosylation. Highly expressed in heart, placenta, liver, kidney and pancreas. Weakly expressed in lung, skeletal muscle and brain.

It is found in the endoplasmic reticulum membrane. It carries out the reaction an alpha-D-Glc-(1-&gt;3)-alpha-D-Glc-(1-&gt;3)-alpha-D-Man-(1-&gt;2)-alpha-D-Man-(1-&gt;2)-alpha-D-Man-(1-&gt;3)-[alpha-D-Man-(1-&gt;2)-alpha-D-Man-(1-&gt;3)-[alpha-D-Man-(1-&gt;2)-alpha-D-Man-(1-&gt;6)]-alpha-D-Man-(1-&gt;6)]-beta-D-Man-(1-&gt;4)-beta-D-GlcNAc-(1-&gt;4)-alpha-D-GlcNAc-diphospho-di-trans,poly-cis-dolichol + a di-trans,poly-cis-dolichyl beta-D-glucosyl phosphate = a alpha-D-Glc-(1-&gt;2)-alpha-D-Glc-(1-&gt;3)-alpha-D-Glc-(1-&gt;3)-alpha-D-Man-(1-&gt;2)-alpha-D-Man-(1-&gt;2)-alpha-D-Man-(1-&gt;3)-[alpha-D-Man-(1-&gt;2)-alpha-D-Man-(1-&gt;3)-[alpha-D-Man-(1-&gt;2)-alpha-D-Man-(1-&gt;6)]-alpha-D-Man-(1-&gt;6)]-beta-D-Man-(1-&gt;4)-beta-D-GlcNAc-(1-&gt;4)-alpha-D-GlcNAc-diphospho-di-trans,poly-cis-dolichol + a di-trans,poly-cis-dolichyl phosphate + H(+). It participates in protein modification; protein glycosylation. Functionally, dol-P-Glc:Glc(2)Man(9)GlcNAc(2)-PP-Dol alpha-1,2-glucosyltransferase that operates in the biosynthetic pathway of dolichol-linked oligosaccharides, the glycan precursors employed in protein asparagine (N)-glycosylation. The assembly of dolichol-linked oligosaccharides begins on the cytosolic side of the endoplasmic reticulum membrane and finishes in its lumen. The sequential addition of sugars to dolichol pyrophosphate produces dolichol-linked oligosaccharides containing fourteen sugars, including two GlcNAcs, nine mannoses and three glucoses. Once assembled, the oligosaccharide is transferred from the lipid to nascent proteins by oligosaccharyltransferases. In the lumen of the endoplasmic reticulum, adds the third and last glucose residue from dolichyl phosphate glucose (Dol-P-Glc) onto the lipid-linked oligosaccharide intermediate Glc(2)Man(9)GlcNAc(2)-PP-Dol to produce Glc(3)Man(9)GlcNAc(2)-PP-Dol. In Homo sapiens (Human), this protein is Dol-P-Glc:Glc(2)Man(9)GlcNAc(2)-PP-Dol alpha-1,2-glucosyltransferase.